The primary structure comprises 329 residues: GTP 3',8-cyclase (329 aa).

Positions 1 to 229 constitute a Radical SAM core domain; it reads MNPVDYLRIS…ESTIKGNGPA (229 aa). Residue Arg8 coordinates GTP. The [4Fe-4S] cluster site is built by Cys15 and Cys19. S-adenosyl-L-methionine is bound at residue Tyr21. Cys22 serves as a coordination point for [4Fe-4S] cluster. Arg60 contributes to the GTP binding site. Position 64 (Gly64) interacts with S-adenosyl-L-methionine. Residue Thr91 participates in GTP binding. An S-adenosyl-L-methionine-binding site is contributed by Ser115. Lys155 contributes to the GTP binding site. Residue Met189 participates in S-adenosyl-L-methionine binding. [4Fe-4S] cluster contacts are provided by Cys252 and Cys255. 257-259 provides a ligand contact to GTP; sequence RMR. Cys269 serves as a coordination point for [4Fe-4S] cluster.

The protein belongs to the radical SAM superfamily. MoaA family. Monomer and homodimer. Requires [4Fe-4S] cluster as cofactor.

It carries out the reaction GTP + AH2 + S-adenosyl-L-methionine = (8S)-3',8-cyclo-7,8-dihydroguanosine 5'-triphosphate + 5'-deoxyadenosine + L-methionine + A + H(+). The protein operates within cofactor biosynthesis; molybdopterin biosynthesis. Functionally, catalyzes the cyclization of GTP to (8S)-3',8-cyclo-7,8-dihydroguanosine 5'-triphosphate. The sequence is that of GTP 3',8-cyclase from Rippkaea orientalis (strain PCC 8801 / RF-1) (Cyanothece sp. (strain PCC 8801)).